The primary structure comprises 287 residues: Large ribosomal subunit protein uL5m (287 aa).

Residues 1 to 18 constitute a mitochondrion transit peptide; the sequence is MLGIRKNIRISVNFLQRR. Residues 80 to 89 are compositionally biased toward basic and acidic residues; that stretch reads DEHTQKDRLP. The segment at 80-109 is disordered; the sequence is DEHTQKDRLPRWIGDNPYYKNRPPQKMRGN.

Belongs to the universal ribosomal protein uL5 family. In terms of assembly, component of the mitochondrial large ribosomal subunit (mt-LSU). Mature yeast 74S mitochondrial ribosomes consist of a small (37S) and a large (54S) subunit. The 37S small subunit contains a 15S ribosomal RNA (15S mt-rRNA) and at least 32 different proteins. The 54S large subunit contains a 21S rRNA (21S mt-rRNA) and at least 45 different proteins. Unlike bacterial L5, uL5m does not bind zinc.

Its subcellular location is the mitochondrion. Its function is as follows. Component of the mitochondrial ribosome (mitoribosome), a dedicated translation machinery responsible for the synthesis of mitochondrial genome-encoded proteins, including at least some of the essential transmembrane subunits of the mitochondrial respiratory chain. The mitoribosomes are attached to the mitochondrial inner membrane and translation products are cotranslationally integrated into the membrane. In Schizosaccharomyces pombe (strain 972 / ATCC 24843) (Fission yeast), this protein is Large ribosomal subunit protein uL5m (mrpl7).